The chain runs to 398 residues: Protochlorophyllide reductase, chloroplastic (398 aa).

The transit peptide at methionine 1–glutamine 64 directs the protein to the chloroplast.

This sequence belongs to the short-chain dehydrogenases/reductases (SDR) family. POR subfamily.

It is found in the plastid. Its subcellular location is the chloroplast. It catalyses the reaction chlorophyllide a + NADP(+) = protochlorophyllide a + NADPH + H(+). It participates in porphyrin-containing compound metabolism; chlorophyll biosynthesis. Phototransformation of protochlorophyllide (Pchlide) to chlorophyllide (Chlide). This is Protochlorophyllide reductase, chloroplastic (PORA) from Cucumis sativus (Cucumber).